The primary structure comprises 465 residues: MLPLVALVGRPNVGKSTLFNALTLTRDALVHDQPGVTRDRHYGVCRIDGQPLFAVVDTGGMVGKEDGLAGATARQARLAVAEADVVLFVVNVREGASALDDDILAWLRKLSQPTLLVINKIDGVSDTTVHSEFAHYGFSDVVPVSAAHRQGLDDLIEQVLAWLPERSIGEAFNEDSERIHIAFVGRPNVGKSTLVNRLLGEERMIVSDVPGTTRDSITVDLERDELRYRLVDTAGLRRKSKVEEAVEKFSAFKTLQAIEQCQVAVLLLDAGEGVTDQDATVLAAILDAGKALVVAMNKWDGLATYQREQAEDLLSRKLGFVNWAEVVRLSAKHGSGLRELFRAIHRAHVSALRQFSTSEVNKALEIAYQTAPPPSIRGHVSKLRYVHPAGSNPPTFIVHGTRLKVLPDTYKRYLENFFRKRFKLVGTPVRFLFREGDNPYEGRKNVLSERQIQRRRRLMRHVKRK.

EngA-type G domains follow at residues 3 to 167 (PLVA…PERS) and 179 to 352 (IHIA…VSAL). GTP contacts are provided by residues 9-16 (GRPNVGKS), 57-61 (DTGGM), 119-122 (NKID), 185-192 (GRPNVGKS), 232-236 (DTAGL), and 297-300 (NKWD). The 85-residue stretch at 353 to 437 (RQFSTSEVNK…PVRFLFREGD (85 aa)) folds into the KH-like domain.

It belongs to the TRAFAC class TrmE-Era-EngA-EngB-Septin-like GTPase superfamily. EngA (Der) GTPase family. As to quaternary structure, associates with the 50S ribosomal subunit.

GTPase that plays an essential role in the late steps of ribosome biogenesis. The sequence is that of GTPase Der from Xylella fastidiosa (strain M23).